Here is a 410-residue protein sequence, read N- to C-terminus: Neuroserpin (410 aa).

The first 16 residues, 1–16 (MAYLGLLSLVALQSLV), serve as a signal peptide directing secretion. S83 carries the post-translational modification Phosphoserine. Residues N157, N321, and N401 are each glycosylated (N-linked (GlcNAc...) asparagine). S403 carries O-linked (Xyl...) (chondroitin sulfate) serine glycosylation.

It belongs to the serpin family. Detected in adult pituitary and adrenal gland.

Its subcellular location is the secreted. The protein localises to the cytoplasmic vesicle. The protein resides in the secretory vesicle lumen. It is found in the perikaryon. Serine protease inhibitor that inhibits plasminogen activators and plasmin but not thrombin. May be involved in the formation or reorganization of synaptic connections as well as for synaptic plasticity in the adult nervous system. May protect neurons from cell damage by tissue-type plasminogen activator. The polypeptide is Neuroserpin (Serpini1) (Rattus norvegicus (Rat)).